Reading from the N-terminus, the 171-residue chain is Nucleoside-triphosphatase THEP1 (171 aa).

Residues 8–15 (GPPGAGKS) and 95–102 (VYLIDEIG) contribute to the ATP site.

Belongs to the THEP1 NTPase family.

The enzyme catalyses a ribonucleoside 5'-triphosphate + H2O = a ribonucleoside 5'-diphosphate + phosphate + H(+). Has nucleotide phosphatase activity towards ATP, GTP, CTP, TTP and UTP. May hydrolyze nucleoside diphosphates with lower efficiency. The protein is Nucleoside-triphosphatase THEP1 of Ignicoccus hospitalis (strain KIN4/I / DSM 18386 / JCM 14125).